A 208-amino-acid chain; its full sequence is MVKVEFAGDVKNLTSYIEKDAKAKIDSVVEEAVKEAEKLLNEKKEELLERAVVDVEKLLSDAQARLSAEKSSIDMEVRRKVEERKKELFQKVVEEAWKRALEEAEKKTERYKKFLEKVLIAMSNEAGEDEVIAYVRADDLEDVRAMVQEKGLKNVVEVKDVKEVGREIKGGVLGKSKSGGVWYNYTLEKAFDELLREVYPKVLEALGF.

The protein belongs to the V-ATPase E subunit family. Has multiple subunits with at least A(3), B(3), C, D, E, F, H, I and proteolipid K(x).

Its subcellular location is the cell membrane. In terms of biological role, component of the A-type ATP synthase that produces ATP from ADP in the presence of a proton gradient across the membrane. The protein is A-type ATP synthase subunit E of Ignicoccus hospitalis (strain KIN4/I / DSM 18386 / JCM 14125).